Here is a 930-residue protein sequence, read N- to C-terminus: Wings apart-like protein 1 (930 aa).

The tract at residues phenylalanine 540–serine 566 is disordered. Low complexity predominate over residues serine 541–serine 553. The segment covering glycine 554–serine 566 has biased composition (polar residues). Residues lysine 854–leucine 909 enclose the WAPL domain.

It belongs to the WAPL family. Interacts with the cohesin complex throughout the cell cycle. In terms of tissue distribution, expressed in roots, leaves, buds and siliques.

The protein resides in the nucleus. It is found in the chromosome. In terms of biological role, regulator of sister chromatid cohesion in meiosis which negatively regulates cohesin association with chromatin, acting as an antagonist of CTF7. Cohesion ensures that chromosome partitioning is accurate in both meiotic and mitotic cells and plays an important role in DNA repair. Essential for the prophase removal of cohesin during meiosis thus determining the timely release of meiotic cohesion. Important for proper spindle attachment and assembly during meiosis. Helps to prevent abnormal centromere association during prophase I in meiocytes. Required for early embryonic patterning. Also involved in chromosome segregation during mitosis. In Arabidopsis thaliana (Mouse-ear cress), this protein is Wings apart-like protein 1.